Consider the following 455-residue polypeptide: Guanine/hypoxanthine permease GhxQ (455 aa).

The Cytoplasmic portion of the chain corresponds to 1–31; the sequence is MSGDILQTPDAPKPQGALDNYFKITARGSTV. The helical transmembrane segment at 32–55 threads the bilayer; that stretch reads RQEVLAGLTTFLAMVYSVIVVPGM. Topologically, residues 56-65 are periplasmic; sequence LGKAGFPPAA. Residues 66–84 traverse the membrane as a helical segment; that stretch reads VFVATCLVAGFGSLLMGLW. Residues 85–86 lie on the Cytoplasmic side of the membrane; that stretch reads AN. Residues 87–103 traverse the membrane as a discontinuously helical segment; sequence LPMAIGCAISLTAFTAF. The Periplasmic portion of the chain corresponds to 104-115; sequence SLVLGQQISVPV. The chain crosses the membrane as a helical span at residues 116-135; sequence ALGAVFLMGVIFTAISVTGV. The Cytoplasmic segment spans residues 136-147; sequence RTWILRNLPMGI. Residues 148–168 traverse the membrane as a helical segment; the sequence is AHGTGIGIGLFLLLIAANGVG. Over 169–186 the chain is Periplasmic; it reads MVIKNPIEGLPVALGAFT. The chain crosses the membrane as a helical span at residues 187-204; sequence SFPVMMSLLGLAVIFGLE. The Cytoplasmic portion of the chain corresponds to 205–208; sequence KCRV. Residues 209–228 form a helical membrane-spanning segment; sequence PGGILLVIIAISIIGLIFDP. At 229–260 the chain is on the periplasmic side; that stretch reads AVKYHGLVAMPSLTGEDGKSLIFSLDIMGALQ. A helical transmembrane segment spans residues 261–289; sequence PTVLPSVLALVMTAVFDATGTIRAVAGQA. The Cytoplasmic segment spans residues 290–302; it reads NLLDKDNQIINGG. The chain crosses the membrane as a helical span at residues 303–318; the sequence is KALTSDSVSSIFSGLV. The Periplasmic portion of the chain corresponds to 319-320; the sequence is GA. A discontinuously helical membrane pass occupies residues 321–336; that stretch reads APAAVYIESAAGTAAG. Topologically, residues 337–340 are cytoplasmic; it reads GKTG. The chain crosses the membrane as a helical span at residues 341-355; the sequence is LTATVVGALFLLILF. Residues 356 to 366 lie on the Periplasmic side of the membrane; it reads LSPLSFLIPGY. A helical membrane pass occupies residues 367–386; that stretch reads ATAPALMYVGLLMLSNVSKL. Over 387 to 391 the chain is Cytoplasmic; the sequence is DFNDF. An intramembrane region (discontinuously helical) is located at residues 392–427; it reads IDAMAGLVCAVFIVLTCNIVTGIMLGFVTLVVGRVF. The Cytoplasmic segment spans residues 428 to 455; that stretch reads AREWQKLNIGTVIITAALVAFYAGGWAI.

The protein belongs to the nucleobase:cation symporter-2 (NCS2) (TC 2.A.40) family. Azg-like subfamily.

It is found in the cell membrane. Its function is as follows. High-affinity transporter for guanine and hypoxanthine. The chain is Guanine/hypoxanthine permease GhxQ (ghxQ) from Escherichia coli (strain K12).